Consider the following 331-residue polypeptide: Ketol-acid reductoisomerase (NADP(+)) (331 aa).

In terms of domain architecture, KARI N-terminal Rossmann spans 2 to 181; that stretch reads TKVYYEDAVK…GATRAGVIET (180 aa). NADP(+) is bound by residues 25–28, arginine 48, serine 52, and 82–85; these read YGSQ and DETQ. Histidine 107 is an active-site residue. Position 133 (glycine 133) interacts with NADP(+). In terms of domain architecture, KARI C-terminal knotted spans 182 to 327; sequence TFKEETETDL…AELREMMPFV (146 aa). Mg(2+) contacts are provided by aspartate 190, glutamate 194, glutamate 226, and glutamate 230. Serine 251 contacts substrate.

It belongs to the ketol-acid reductoisomerase family. It depends on Mg(2+) as a cofactor.

The catalysed reaction is (2R)-2,3-dihydroxy-3-methylbutanoate + NADP(+) = (2S)-2-acetolactate + NADPH + H(+). It carries out the reaction (2R,3R)-2,3-dihydroxy-3-methylpentanoate + NADP(+) = (S)-2-ethyl-2-hydroxy-3-oxobutanoate + NADPH + H(+). It participates in amino-acid biosynthesis; L-isoleucine biosynthesis; L-isoleucine from 2-oxobutanoate: step 2/4. The protein operates within amino-acid biosynthesis; L-valine biosynthesis; L-valine from pyruvate: step 2/4. Involved in the biosynthesis of branched-chain amino acids (BCAA). Catalyzes an alkyl-migration followed by a ketol-acid reduction of (S)-2-acetolactate (S2AL) to yield (R)-2,3-dihydroxy-isovalerate. In the isomerase reaction, S2AL is rearranged via a Mg-dependent methyl migration to produce 3-hydroxy-3-methyl-2-ketobutyrate (HMKB). In the reductase reaction, this 2-ketoacid undergoes a metal-dependent reduction by NADPH to yield (R)-2,3-dihydroxy-isovalerate. The protein is Ketol-acid reductoisomerase (NADP(+)) of Listeria innocua serovar 6a (strain ATCC BAA-680 / CLIP 11262).